A 500-amino-acid chain; its full sequence is E3 ubiquitin-protein ligase TRIM69 (500 aa).

The interval 1-152 is necessary for nuclear localization; it reads MEVSTNPSSN…SVGQSKEFLQ (152 aa). The segment at 41-82 adopts an RING-type zinc-finger fold; that stretch reads CPLCNDWFRDPLMLSCGHNFCEACIQDFWRLQAKETFCPECK. Residues 161–255 adopt a coiled-coil conformation; it reads TEELAIQQGQ…QCLLAKDMLV (95 aa). One can recognise a B30.2/SPRY domain in the interval 305 to 500; sequence PIQYMVWREM…KEPLHILHPQ (196 aa). Position 341 is a phosphoserine (S341).

The protein belongs to the TRIM/RBCC family. As to quaternary structure, homo-multimer; required for antiviral activity. Interacts with PML. In terms of processing, phosphorylated. Phosphorylation is necessary for nuclear localization.

Its subcellular location is the cytoplasm. The protein resides in the nucleus. The protein localises to the nucleus speckle. It localises to the cytoskeleton. It is found in the microtubule organizing center. Its subcellular location is the centrosome. It catalyses the reaction S-ubiquitinyl-[E2 ubiquitin-conjugating enzyme]-L-cysteine + [acceptor protein]-L-lysine = [E2 ubiquitin-conjugating enzyme]-L-cysteine + N(6)-ubiquitinyl-[acceptor protein]-L-lysine.. Its pathway is protein modification; protein ubiquitination. In terms of biological role, E3 ubiquitin ligase that plays an important role in antiviral immunity by restricting different viral infections including dengue virus or vesicular stomatitis indiana virus. Ubiquitinates viral proteins such as dengue virus NS3 thereby limiting infection. In addition, acts as a key mediator of type I interferon induced microtubule stabilization by directly associating to microtubules independently of its E3 ligase activity. Also plays a role in cataract formation together with TP53. Mechanistically, inhibits UVB-induced cell apoptosis and reactive oxygen species (ROS) production by inducing TP53 ubiquitination. Regulates centrosome dynamics and mitotic progression by ubiquitinating STK3/MST2; leading to its redistribution to the perinuclear cytoskeleton and subsequent phosphorylation by PLK1. In Homo sapiens (Human), this protein is E3 ubiquitin-protein ligase TRIM69 (TRIM69).